A 471-amino-acid polypeptide reads, in one-letter code: Putative multidrug resistance protein MdtD (471 aa).

The Periplasmic segment spans residues 1–11 (MTDLPDSTRWQ). A helical membrane pass occupies residues 12-32 (LWIVAFGFFMQSLDTTIVNTA). Residues 33-48 (LPSMAQSLGESPLHMH) are Cytoplasmic-facing. Residues 49–69 (MVIVSYVLTVAVMLPASGWLA) form a helical membrane-spanning segment. The Periplasmic segment spans residues 70-76 (DKVGVRN). A helical transmembrane segment spans residues 77–97 (IFFTAIVLFTLGSLFCALSGT). Over 98 to 101 (LNEL) the chain is Cytoplasmic. The helical transmembrane segment at 102-124 (LLARALQGVGGAMMVPVGRLTVM) threads the bilayer. At 125–137 (KIVPREQYMAAMT) the chain is on the periplasmic side. Residues 138 to 158 (FVTLPGQIGPLLGPALGGLLV) form a helical membrane-spanning segment. At 159–164 (EYASWH) the chain is on the cytoplasmic side. Residues 165–185 (WIFLINIPVGIIGAIATLMLM) traverse the membrane as a helical segment. Residues 186-196 (PNYTMQTRRFD) lie on the Periplasmic side of the membrane. A helical transmembrane segment spans residues 197–217 (LSGFLLLAVGMAVLTLALDGS). Residues 218–224 (KGTGFSP) are Cytoplasmic-facing. A helical membrane pass occupies residues 225–245 (LAIAGLVAVGVVALVLYLLHA). Residues 246 to 262 (QNNNRALFSLKLFRTRT) are Periplasmic-facing. The helical transmembrane segment at 263-283 (FSLGLAGSFAGRIGSGMLPFM) threads the bilayer. The Cytoplasmic portion of the chain corresponds to 284–285 (TP). Residues 286 to 306 (VFLQIGLGFSPFHAGLMMIPM) form a helical membrane-spanning segment. Over 307 to 341 (VLGSMGMKRIVVQVVNRFGYRWVLVATTLGLSLVT) the chain is Periplasmic. A helical membrane pass occupies residues 342-362 (LLFMTTALLGWYYVLPFVLFL). Residues 363-395 (QGMVNSTRFSSMNTLTLKDLPDNLASSGNSLLS) lie on the Cytoplasmic side of the membrane. Residues 396 to 416 (MIMQLSMSIGVTIAGLLLGLF) traverse the membrane as a helical segment. At 417–430 (GSQHVSVDSGTTQT) the chain is on the periplasmic side. The helical transmembrane segment at 431–451 (VFMYTWLSMAFIIALPAFVFA) threads the bilayer. The Cytoplasmic segment spans residues 452 to 471 (RVPSDTHQNVAISRRKRSAQ).

Belongs to the major facilitator superfamily. TCR/Tet family.

It localises to the cell inner membrane. The sequence is that of Putative multidrug resistance protein MdtD from Escherichia coli O81 (strain ED1a).